Consider the following 205-residue polypeptide: Guanylate kinase (205 aa).

Residues 6-184 form the Guanylate kinase-like domain; that stretch reads GLLIVLSGPA…AVERIKAIVT (179 aa). An ATP-binding site is contributed by 13–20; it reads GPAGVGKG.

Belongs to the guanylate kinase family.

It is found in the cytoplasm. It catalyses the reaction GMP + ATP = GDP + ADP. Functionally, essential for recycling GMP and indirectly, cGMP. The polypeptide is Guanylate kinase (Shouchella clausii (strain KSM-K16) (Alkalihalobacillus clausii)).